A 716-amino-acid chain; its full sequence is Probable extracellular serine carboxypeptidase (716 aa).

The N-terminal stretch at 1 to 17 (MVKLTACLLLLVAAVQA) is a signal peptide. Residues asparagine 143 and asparagine 174 are each glycosylated (N-linked (GlcNAc...) asparagine). Residue serine 188 is the Charge relay system of the active site. N-linked (GlcNAc...) asparagine glycans are attached at residues asparagine 258 and asparagine 354. The active-site Charge relay system is the aspartate 466. Residues asparagine 507 and asparagine 550 are each glycosylated (N-linked (GlcNAc...) asparagine). The interval 617–636 (RDLAAQPSKSKKDRRGQQLS) is disordered. Residues 652 to 672 (LGFVSFLVFAFSSFTFIPDIE) traverse the membrane as a helical segment.

It belongs to the peptidase S28 family.

Its subcellular location is the membrane. It is found in the secreted. This is Probable extracellular serine carboxypeptidase from Arthroderma benhamiae (strain ATCC MYA-4681 / CBS 112371) (Trichophyton mentagrophytes).